Consider the following 504-residue polypeptide: Sodium-coupled neutral amino acid transporter 3 (504 aa).

A Phosphoserine; by PKC modification is found at Ser52. N-linked (GlcNAc...) asparagine glycosylation occurs at Asn73. The next 5 membrane-spanning stretches (helical) occupy residues 82–102 (GILG…LFLL), 105–125 (VALL…IVGI), 143–163 (AAAL…LYII), 186–206 (MDGN…LALM), and 212–232 (LGYS…AVIY). A disulfide bridge connects residues Cys239 and Cys275. N-linked (GlcNAc...) asparagine glycans are attached at residues Asn247 and Asn251. A helical transmembrane segment spans residues 287–307 (AYTIPIMAFAFVCHPEVLPIY). Asn323 carries N-linked (GlcNAc...) asparagine glycosylation. The next 5 helical transmembrane spans lie at 324 to 344 (LSIA…YLTF), 366 to 386 (ILCV…IVLF), 408 to 428 (VLIA…APNI), 431 to 451 (IFGI…PAIF), and 469 to 489 (ILAL…LSFI).

It belongs to the amino acid/polyamine transporter 2 family. In terms of processing, phosphorylation at Ser-52 induces internalization and sequestration into an intracellular reservoir. During dephosphorylation by protein phosphatases, can recycle back to the plasma membrane and regain activity. Prolonged phosphorylation results in its degradation. Highly expressed in liver. Expressed in skeletal muscle. Expressed in kidney, heart and brain. Not detected in gut, lung or spleen. Expressed ubiquitously in hepatocytes in liver whereas in kidney expression is restricted to the medulla. Within brain, expressed in glial cells. In the cerebellum, expressed on Bergmann glial fibers in the molecular layer and astrocytes in the granule layer. Expressed in brain kidney and liver (at protein level). In the adult kidney, highly expressed in the outer strip of the outer medulla and medullary rays penetrating into the kidney cortex (at protein level).

The protein resides in the cell membrane. It is found in the basolateral cell membrane. The enzyme catalyses L-glutamine(out) + Na(+)(out) + H(+)(in) = L-glutamine(in) + Na(+)(in) + H(+)(out). It carries out the reaction L-asparagine(out) + Na(+)(out) + H(+)(in) = L-asparagine(in) + Na(+)(in) + H(+)(out). It catalyses the reaction L-histidine(out) + Na(+)(out) + H(+)(in) = L-histidine(in) + Na(+)(in) + H(+)(out). With respect to regulation, L-glutamine efflux and L-glutamine uptake are regulated by CO2/HCO3(-) through SLC4A4 leading to modulation of cytosolic pH and Na(+)concentration. Functionally, symporter that cotransports specific neutral amino acids and sodium ions, coupled to an H(+) antiporter activity. Mainly participates in the glutamate-GABA-glutamine cycle in brain where it transports L-glutamine from astrocytes in the intercellular space for the replenishment of both neurotransmitters glutamate and gamma-aminobutyric acid (GABA) in neurons. Also functions as the major influx transporter in ganglion cells mediating the uptake of glutamine. The transport activity is specific for L-glutamine, L-histidine and L-asparagine. The transport is electroneutral coupled to the cotransport of 1 Na(+) and the antiport of 1 H(+), pH dependent, saturable, Li(+) tolerant and functions in both direction depending on the concentration gradients of its substrates and cotransported ions. Also mediates an amino acid-gated H(+) conductance that is not stoichiometrically coupled to the amino acid transport but which influences the ionic gradients that drive the amino acid transport. In addition, may play a role in nitrogen metabolism, amino acid homeostasis, glucose metabolism and renal ammoniagenesis. In Rattus norvegicus (Rat), this protein is Sodium-coupled neutral amino acid transporter 3.